Here is a 426-residue protein sequence, read N- to C-terminus: UDP-N-acetylmuramoylalanine--D-glutamate ligase (426 aa).

An ATP-binding site is contributed by 112 to 118; that stretch reads GSVGKST.

The protein belongs to the MurCDEF family.

It localises to the cytoplasm. The catalysed reaction is UDP-N-acetyl-alpha-D-muramoyl-L-alanine + D-glutamate + ATP = UDP-N-acetyl-alpha-D-muramoyl-L-alanyl-D-glutamate + ADP + phosphate + H(+). It participates in cell wall biogenesis; peptidoglycan biosynthesis. Its function is as follows. Cell wall formation. Catalyzes the addition of glutamate to the nucleotide precursor UDP-N-acetylmuramoyl-L-alanine (UMA). The polypeptide is UDP-N-acetylmuramoylalanine--D-glutamate ligase (Thermosipho melanesiensis (strain DSM 12029 / CIP 104789 / BI429)).